A 375-amino-acid polypeptide reads, in one-letter code: Stomatin-2 (375 aa).

The disordered stretch occupies residues 1–75; that stretch reads MKTQPSEESA…IPVPTGQPRG (75 aa). The span at 11–50 shows a compositional bias: low complexity; sequence SPAPVNPGNSGNSGNRRASSTRISFSDQLDGGDSGDSSSN. A helical transmembrane segment spans residues 120-140; sequence GLGFCGWFLMGLSWIMVISTF.

The protein belongs to the band 7/mec-2 family.

It localises to the membrane. In terms of biological role, may be involved in cilia-related function. The chain is Stomatin-2 (sto-2) from Caenorhabditis elegans.